The sequence spans 294 residues: MEDSMDMDMSPLRPQNYLFGCELKADRDYHFKVDNDENEHQLSLRTVSLGAGAKDELHVVEAEAMNYEGSPIKVTLATLKMSVQPTVSLGGFEITPPVVLRLKCGSGPVHISGQHLVAVEEDAESEEEEEEEVKLLSISGKRSAPGSGSKVPQKKVKLAADEDEDDDDDDDDDDDEDDDDDDFDEEVEEKAPVKKSVRDTPAKNAQKSNQNGKDSKPSTPRSKGQESFKKQEKTPKTPRGPSSVEDIKAKMQASIEKGGSLPKVEAKFINYVKNCFRMTDQEAIQDLWQWRKSL.

M1 carries the N-acetylmethionine modification. Residues 1 to 117 (MEDSMDMDMS…PVHISGQHLV (117 aa)) are necessary for interaction with APEX1. A required for interaction with SENP3 region spans residues 1-187 (MEDSMDMDMS…DDDDDFDEEV (187 aa)). S4 bears the Phosphoserine; by PLK1 and PLK2 mark. S10 is subject to Phosphoserine. K32 is modified (N6-acetyllysine; alternate). Residue K32 forms a Glycyl lysine isopeptide (Lys-Gly) (interchain with G-Cter in SUMO1); alternate linkage. K32 participates in a covalent cross-link: Glycyl lysine isopeptide (Lys-Gly) (interchain with G-Cter in SUMO2); alternate. Phosphoserine is present on S43. Y67 carries the post-translational modification Phosphotyrosine. S70 bears the Phosphoserine mark. 2 positions are modified to phosphothreonine: T75 and T95. Over residues 121-132 (EDAESEEEEEEE) the composition is skewed to acidic residues. The disordered stretch occupies residues 121-249 (EDAESEEEEE…GPSSVEDIKA (129 aa)). Phosphoserine; by CDK2 is present on S125. S137 and S139 each carry phosphoserine. K141 is covalently cross-linked (Glycyl lysine isopeptide (Lys-Gly) (interchain with G-Cter in SUMO2)). An N6-acetyllysine; alternate modification is found at K150. K150 is covalently cross-linked (Glycyl lysine isopeptide (Lys-Gly) (interchain with G-Cter in SUMO2); alternate). The short motif at 152-157 (PQKKVK) is the Nuclear localization signal element. K154 carries the post-translational modification N6-acetyllysine. Acidic residues predominate over residues 161–188 (DEDEDDDDDDDDDDDEDDDDDDFDEEVE). Residues 188–216 (EEKAPVKKSVRDTPAKNAQKSNQNGKDSK) are interaction with NOP2. The span at 189–201 (EKAPVKKSVRDTP) shows a compositional bias: basic and acidic residues. The Nuclear localization signal signature appears at 192–198 (PVKKSVR). A Phosphothreonine; by CDK1 and CDK2 modification is found at T200. A compositionally biased stretch (polar residues) spans 203–222 (KNAQKSNQNGKDSKPSTPRS). S208 is modified (ADP-ribosylserine). An N6-acetyllysine modification is found at K213. A Glycyl lysine isopeptide (Lys-Gly) (interchain with G-Cter in SUMO2) cross-link involves residue K216. T219 carries the phosphothreonine; by CDK1 modification. Basic and acidic residues predominate over residues 223–235 (KGQESFKKQEKTP). S227 is modified (phosphoserine). The residue at position 229 (K229) is an N6-acetyllysine. K230 bears the N6-acetyllysine; alternate mark. K230 participates in a covalent cross-link: Glycyl lysine isopeptide (Lys-Gly) (interchain with G-Cter in SUMO); alternate. Residues T234 and T237 each carry the phosphothreonine modification. S242 and S243 each carry phosphoserine. Residues 243–294 (SVEDIKAKMQASIEKGGSLPKVEAKFINYVKNCFRMTDQEAIQDLWQWRKSL) are required for nucleolar localization. K248 participates in a covalent cross-link: Glycyl lysine isopeptide (Lys-Gly) (interchain with G-Cter in SUMO1); alternate. Residues K248 and K250 each participate in a glycyl lysine isopeptide (Lys-Gly) (interchain with G-Cter in SUMO2); alternate cross-link. K250 is modified (N6-acetyllysine; alternate). S254 bears the Phosphoserine mark. K257 is modified (N6-acetyllysine; alternate). K257 participates in a covalent cross-link: Glycyl lysine isopeptide (Lys-Gly) (interchain with G-Cter in SUMO1); alternate. K257 is covalently cross-linked (Glycyl lysine isopeptide (Lys-Gly) (interchain with G-Cter in SUMO2); alternate). Phosphoserine is present on S260. Residues K263, K267, and K273 each participate in a glycyl lysine isopeptide (Lys-Gly) (interchain with G-Cter in SUMO2); alternate cross-link. Residue K263 forms a Glycyl lysine isopeptide (Lys-Gly) (interchain with G-Cter in SUMO); alternate linkage. 2 positions are modified to N6-acetyllysine; alternate: K267 and K273. A Glycyl lysine isopeptide (Lys-Gly) (interchain with G-Cter in SUMO1); alternate cross-link involves residue K267. The residue at position 267 (K267) is an N6-succinyllysine; alternate. At T279 the chain carries Phosphothreonine. N6-acetyllysine is present on K292.

Belongs to the nucleoplasmin family. As to quaternary structure, decamer formed by two pentameric rings associated in a head-to-head fashion. Disulfide-linked dimers under certain conditions. The SWAP complex consists of NPM1, NCL, PARP1 and SWAP70. Interacts with NSUN2 and SENP3. Interacts with the methylated form of RPS10. Interacts (via N-terminal domain) with APEX1; the interaction is RNA-dependent and decreases in hydrogen peroxide-damaged cells. Interacts with isoform 1 of NEK2. Interacts with ROCK2 and BRCA2. Interacts with RPGR. Interacts with CENPW. Interacts with EIF2AK2/PKR. Interacts with CEBPA (isoform 4). Interacts with DDX31; this interaction prevents interaction between NPM1 and HDM2. Interacts with MYC; competitive with NOP53. Interacts with NOP53; the interaction is direct and competitive with MYC. Interacts with LRRC34. Interacts with RRP1B. Interacts with NPM3. Interacts with ALKBH2. Interacts with TTF1 (via C-terminal region). Interacts with NOP2. Interacts with ARID3C (via REKLES DOMAIN); the interaction mediates ARID3C nuclear shuttling. Post-translationally, acetylated at C-terminal lysine residues, thereby increasing affinity to histones. ADP-ribosylated. In terms of processing, phosphorylated at Ser-4 by PLK1 and PLK2. Phosphorylation at Ser-4 by PLK2 in S phase is required for centriole duplication and is sufficient to trigger centriole replication. Phosphorylation at Ser-4 by PLK1 takes place during mitosis. Phosphorylated by CDK2 at Ser-125 and Thr-200. Phosphorylation at Thr-200 may trigger initiation of centrosome duplication. Phosphorylated by CDK1 at Thr-200, Thr-219, Thr-234 and Thr-237 during cell mitosis. When these four sites are phosphorated, RNA-binding activity seem to be abolished. May be phosphorylated at Ser-70 by NEK2. The Thr-200 phosphorylated form has higher affinity for ROCK2. Post-translationally, sumoylated by ARF. May be ubiquitinated. Ubiquitination leads to proteasomal degradation. Deubiquitinated by USP36.

It is found in the nucleus. It localises to the nucleolus. Its subcellular location is the nucleoplasm. The protein resides in the cytoplasm. The protein localises to the cytoskeleton. It is found in the microtubule organizing center. It localises to the centrosome. Functionally, involved in diverse cellular processes such as ribosome biogenesis, centrosome duplication, protein chaperoning, histone assembly, cell proliferation, and regulation of tumor suppressors p53/TP53 and ARF. Binds ribosome presumably to drive ribosome nuclear export. Associated with nucleolar ribonucleoprotein structures and bind single-stranded nucleic acids. Acts as a chaperonin for the core histones H3, H2B and H4. Stimulates APEX1 endonuclease activity on apurinic/apyrimidinic (AP) double-stranded DNA but inhibits APEX1 endonuclease activity on AP single-stranded RNA. May exert a control of APEX1 endonuclease activity within nucleoli devoted to repair AP on rDNA and the removal of oxidized rRNA molecules. In concert with BRCA2, regulates centrosome duplication. Regulates centriole duplication: phosphorylation by PLK2 is able to trigger centriole replication. Negatively regulates the activation of EIF2AK2/PKR and suppresses apoptosis through inhibition of EIF2AK2/PKR autophosphorylation. Antagonizes the inhibitory effect of ATF5 on cell proliferation and relieves ATF5-induced G2/M blockade. In complex with MYC enhances the transcription of MYC target genes. May act as chaperonin or cotransporter in the nucleolar localization of transcription termination factor TTF1. The sequence is that of Nucleophosmin (NPM1) from Bos taurus (Bovine).